Reading from the N-terminus, the 925-residue chain is Periplasmic nitrate reductase (925 aa).

A signal peptide (tat-type signal) is located at residues 1 to 30 (MDRREFIKSSAAAAACSAAGIAVPSSLSAA). One can recognise a 4Fe-4S Mo/W bis-MGD-type domain in the interval 36 to 92 (WRWDKSACRFCGTGCGIMVATKNGKIVAVKGDPLAPVNRGLNCIKGYFNAKIMYGED). Residues cysteine 43, cysteine 46, cysteine 50, and cysteine 78 each coordinate [4Fe-4S] cluster. Mo-bis(molybdopterin guanine dinucleotide) contacts are provided by residues lysine 80, glutamine 148, asparagine 173, cysteine 177, 210–217 (WGANMAEM), methionine 418, glutamine 422, asparagine 528, 553–554 (SD), lysine 576, aspartate 603, and 815–824 (TGRVLEHWHS). Tryptophan 891 is a substrate binding site. Mo-bis(molybdopterin guanine dinucleotide) contacts are provided by asparagine 899 and lysine 916.

The protein belongs to the prokaryotic molybdopterin-containing oxidoreductase family. NasA/NapA/NarB subfamily. In terms of assembly, component of the periplasmic nitrate reductase NapAB complex composed of NapA and NapB. [4Fe-4S] cluster is required as a cofactor. It depends on Mo-bis(molybdopterin guanine dinucleotide) as a cofactor. In terms of processing, predicted to be exported by the Tat system. The position of the signal peptide cleavage has not been experimentally proven.

It localises to the periplasm. The catalysed reaction is 2 Fe(II)-[cytochrome] + nitrate + 2 H(+) = 2 Fe(III)-[cytochrome] + nitrite + H2O. In terms of biological role, catalytic subunit of the periplasmic nitrate reductase complex NapAB. Receives electrons from NapB and catalyzes the reduction of nitrate to nitrite. This is Periplasmic nitrate reductase from Campylobacter fetus subsp. fetus (strain 82-40).